Reading from the N-terminus, the 293-residue chain is Kynurenine formamidase (293 aa).

The short motif at 84–88 (HGGYW) is the HGGXW element. S153 serves as the catalytic Nucleophile. Catalysis depends on residues D236 and H268.

It belongs to the kynurenine formamidase family. In terms of assembly, homodimer.

The protein localises to the cytoplasm. Its subcellular location is the cytosol. It is found in the nucleus. It carries out the reaction N-formyl-L-kynurenine + H2O = L-kynurenine + formate + H(+). It functions in the pathway amino-acid degradation; L-tryptophan degradation via kynurenine pathway; L-kynurenine from L-tryptophan: step 2/2. In terms of biological role, catalyzes the hydrolysis of N-formyl-L-kynurenine to L-kynurenine, the second step in the kynurenine pathway of tryptophan degradation. Kynurenine may be further oxidized to nicotinic acid, NAD(H) and NADP(H). Required for elimination of toxic metabolites. The chain is Kynurenine formamidase (afmid) from Danio rerio (Zebrafish).